The sequence spans 143 residues: uncharacterized protein (143 aa).

An N-terminal signal peptide occupies residues 1–27 (MSDEIARLVADVFELAGLLRRSGEVVA).

This is an uncharacterized protein from Mycobacterium tuberculosis (strain CDC 1551 / Oshkosh).